A 289-amino-acid chain; its full sequence is UPF0276 protein BPP1075 (289 aa).

The protein belongs to the UPF0276 family.

In Bordetella parapertussis (strain 12822 / ATCC BAA-587 / NCTC 13253), this protein is UPF0276 protein BPP1075.